The primary structure comprises 433 residues: UDP-N-acetylglucosamine 1-carboxyvinyltransferase 2 (433 aa).

A phosphoenolpyruvate-binding site is contributed by 23-24 (KN). Residue Arg96 coordinates UDP-N-acetyl-alpha-D-glucosamine. Residue Cys120 is the Proton donor of the active site. Position 120 is a 2-(S-cysteinyl)pyruvic acid O-phosphothioketal (Cys120). Residues 125-129 (RPIDL), Asp308, and Val330 contribute to the UDP-N-acetyl-alpha-D-glucosamine site.

The protein belongs to the EPSP synthase family. MurA subfamily.

The protein resides in the cytoplasm. The catalysed reaction is phosphoenolpyruvate + UDP-N-acetyl-alpha-D-glucosamine = UDP-N-acetyl-3-O-(1-carboxyvinyl)-alpha-D-glucosamine + phosphate. Its pathway is cell wall biogenesis; peptidoglycan biosynthesis. In terms of biological role, cell wall formation. Adds enolpyruvyl to UDP-N-acetylglucosamine. In Enterococcus faecalis (strain ATCC 700802 / V583), this protein is UDP-N-acetylglucosamine 1-carboxyvinyltransferase 2.